The following is a 570-amino-acid chain: Ribosome-inactivating protein SNAI (570 aa).

The first 28 residues, 1–28 (MRLVAKLLYLAVLAICGLGIHGALTHPR), serve as a signal peptide directing secretion. Residues Asn-40, Asn-62, and Asn-144 are each glycosylated (N-linked (GlcNAc...) asparagine). Residue Glu-199 is part of the active site. The N-linked (GlcNAc...) asparagine glycan is linked to Asn-260. 3 disulfide bridges follow: Cys-284-Cys-316, Cys-332-Cys-351, and Cys-373-Cys-385. Ricin B-type lectin domains lie at 319–439 (VEVT…WTVG) and 441–566 (VEPL…WITT). A 1-alpha repeat occupies 329–369 (DGLCVDVRYGHYIDGNPVQLRPCGNECNQLWTFRTDGTIRW). The stretch at 370–405 (LGKCLTASSSVMIYDCNTVPPEATKWVVSIDGTITN) is one 1-beta repeat. One copy of the 1-gamma repeat lies at 408–440 (SGLVLTAPQAAEGTALSLENNIHAARQGWTVGD). Residues 452-489 (KQMCLRENGENNFVWLEDCVLNRVQQEWALYGDGTIRV) form a 2-alpha repeat. Cys-455 and Cys-470 are disulfide-bonded. N-linked (GlcNAc...) asparagine glycosylation occurs at Asn-492. One copy of the 2-beta repeat lies at 493–531 (RSLCVTSEDHEPSDLIVILKCEGSGNQRWVFNTNGTISN). Cys-496 and Cys-513 form a disulfide bridge. Asn-526 is a glycosylation site (N-linked (GlcNAc...) asparagine). One copy of the 2-gamma repeat lies at 534–567 (AKLLMDVAQRDVSLRKIILYRPTGNPNQQWITTT).

This sequence belongs to the ribosome-inactivating protein family. Type 2 RIP subfamily. In terms of assembly, tetramer of four pairs of disulfide bound A-B chains. In terms of processing, the precursor is processed in two chains, A and B, that are linked by a disulfide bond. A small truncated form corresponding roughly to the second ricin B-type lectin domain of the B chain, TrSNAI, can also be produced. Post-translationally, glycosylated. N-glycans of subunit A are (Man)2-3(Xyl)(GlcNAc)2(Fuc) at Asn-40, (GlcNAc)0-2(Man)3(Xyl)(GlcNAc)2(Fuc) or (Man)1-2(GlcNAc)2 at Asn-62, (Man)3(Xyl)(GlcNAc)2(Fuc)0-1 at Asn-144 and (GlcNAc)0-1(Man)3(Xyl)(GlcNAc)2(Fuc) at Asn-260. N-glycans of subunit B are (Man)3(Xyl)(GlcNAc)2(Fuc) at Asn-492 and (Man)6-9(GlcNAc)2 at Asn-526. In terms of tissue distribution, expressed in bark.

The catalysed reaction is Endohydrolysis of the N-glycosidic bond at one specific adenosine on the 28S rRNA.. In terms of biological role, neu5Ac(alpha2-6)Gal/GalNAc specific agglutinin. Behaves as a type-2 ribosome-inactivating protein. Strongly inhibits mammalian but not plant ribosomes. The A chain is responsible for inhibiting protein synthesis through the catalytic inactivation of 60S ribosomal subunits by removing adenine from position 4,324 of 28S rRNA. The B chain binds to cell receptors and probably facilitates the entry into the cell of the A chain; B chains are also responsible for cell agglutination (lectin activity). Involved in plant defense against insects. Binds Neu5Ac(alpha2-6)Gal/GalNAc but has no clear agglutination activity. The protein is Ribosome-inactivating protein SNAI of Sambucus nigra (European elder).